The following is a 4239-amino-acid chain: Tenellin synthetase (4239 aa).

A Ketosynthase family 3 (KS3) domain is found at 15 to 454 (SEPIAIIGSA…GTNAHAIIER (440 aa)). Active-site for beta-ketoacyl synthase activity residues include Cys189, His326, and His374. The interval 589–923 (VFTGQGAQWP…ANDAVAFSTA (335 aa)) is malonyl-CoA:ACP transacylase (MAT) domain. The segment at 993-1135 (HELLGRRTPD…GRIAVQLGAK (143 aa)) is N-terminal hotdog fold. The dehydratase (DH) domain stretch occupies residues 993–1310 (HELLGRRTPD…GFEVRAVGEP (318 aa)). Positions 993–1313 (HELLGRRTPD…VRAVGEPDAS (321 aa)) constitute a PKS/mFAS DH domain. His1025 serves as the catalytic Proton acceptor; for dehydratase activity. Positions 1158-1313 (LQQLDCEKLY…VRAVGEPDAS (156 aa)) are C-terminal hotdog fold. The Proton donor; for dehydratase activity role is filled by Asp1217. The segment at 1459-1652 (RLYTEDKGMH…FSGVDHIVHD (194 aa)) is methyltransferase (MT) domain. Residues 2209–2382 (TYLMVGAAGG…AASIIHVGHV (174 aa)) form a ketoreductase (KR) domain region. Residues 2502 to 2582 (EAAVAALKGF…QLSALAAKLA (81 aa)) enclose the Carrier 1 domain. Ser2542 carries the post-translational modification O-(pantetheine 4'-phosphoryl)serine. Disordered stretches follow at residues 2587 to 2629 (KKRA…EIAQ) and 2642 to 2712 (LEAS…FFTQ). Polar residues-rich tracts occupy residues 2648 to 2662 (GGSS…SSVS) and 2670 to 2681 (ESTLQSSDNNGE). Residues 2682 to 2698 (STPSKSSNCNSDSGSDN) show a composition bias toward low complexity. A condensation (C) domain region spans residues 2723 to 3169 (REAPMSPAQS…SAQSVGDCVV (447 aa)). An adenylation (A) (KR) domain region spans residues 3203-3614 (CQQHSTKSAI…DGTLLCFGRI (412 aa)). The interval 3728 to 3752 (EAAAATSPSNNNINNNTPSGGGGEK) is disordered. The segment covering 3729-3745 (AAAATSPSNNNINNNTP) has biased composition (low complexity). The Carrier 2 domain occupies 3751 to 3835 (EKMTVRQGEL…GMARCVAEQR (85 aa)). Ser3795 bears the O-(pantetheine 4'-phosphoryl)serine mark. Residues 3862–3892 (EKLQHSSASSSSSSSSSSSAGSSSTQRPRKT) are disordered. The segment covering 3867–3885 (SSASSSSSSSSSSSAGSSS) has biased composition (low complexity). Positions 3899–4145 (LTGATGFLGG…LDFGQVDKVV (247 aa)) are reductase (RED) domain.

The protein in the C-terminal section; belongs to the NRP synthetase family.

It participates in secondary metabolite biosynthesis. Functionally, hybrid PKS-NRPS synthetase; part of the gene cluster that mediates the biosynthesis of tenellin-type 2-pyridones, iron-chelating compounds involved in iron stress tolerance, competition with the natural competitor fungus Metarhizium robertsii and insect hosts infection. TenS catalyzes the assembly of the polyketide-amino acid backbone. Because tenS lacks a designated enoylreductase (ER) domain, the required activity is provided the enoyl reductase tenC. Upon formation of the polyketide backbone on the thiotemplate, the triketide is transferred to the NRPS module and linked to tyrosine to produce the pyrrolidine-2-dione intermediates, including pretellinin A, 11-hydropretellenin A, 12-hydropretellenin A, 13-hydropretellenin A, 14-hydropretellenin A, 12-oxopretellenin A and prototellinin D. The pathway begins with the assembly of the polyketide-amino acid backbone by the hybrid PKS-NRPS tenS with the help of the enoyl reductase tenC. These enzymes catalyze the synthesis of the pyrrolidine-2-dione intermediates pretellinin A, 11-hydropretellenin A, 12-hydropretellenin A, 13-hydropretellenin A, 14-hydropretellenin A, 12-oxopretellenin A and prototellinin D. The cytochrome P450 monooxygenase tenA then catalyzes an oxidative ring expansion of pretenellin A and 14-hydropretellenin A to form the 2-pyridone core, leading to pretenellin B and pyridovericin, respectively. The cytochrome P450 monooxygenase tenB is then required for the selective N-hydroxylation of the 2-pyridone nitrogen of yield tellinin and 15-hydroxytellenin (15-HT), respectively. The UDP-glucosyltransferase GT1 and the methyltransferase MT1, located outside the tenS gene cluster, contribute to the stepwise glycosylation and methylation of 15-HT to obtain the glycoside pyridovericin-N-O-(4-O-methyl-beta-D-glucopyranoside) (PMGP). Additional related compounds such as 1-O-methyl-15-HT, (8Z)-1-O-methyl-15-HT, and O-methyltenellin A are also produced but the enzymes involved in their biosynthesis have still to be determined. The chain is Tenellin synthetase from Beauveria bassiana (White muscardine disease fungus).